We begin with the raw amino-acid sequence, 337 residues long: Holliday junction branch migration complex subunit RuvB (337 aa).

A large ATPase domain (RuvB-L) region spans residues 1–179; sequence MTHQVSVLHQ…FSFTGRVAYY (179 aa). ATP contacts are provided by residues leucine 18, arginine 19, glycine 60, lysine 63, threonine 64, serine 65, 126-128, arginine 169, tyrosine 179, and arginine 216; that span reads EDY. Mg(2+) is bound at residue threonine 64. The small ATPAse domain (RuvB-S) stretch occupies residues 180 to 250; that stretch reads SDEDLATILR…VAEKALAMLL (71 aa). Residues 253 to 337 form a head domain (RuvB-H) region; it reads EWGLNEIDIK…DNLQSLGEEK (85 aa). DNA contacts are provided by lysine 308 and arginine 313.

Belongs to the RuvB family. As to quaternary structure, homohexamer. Forms an RuvA(8)-RuvB(12)-Holliday junction (HJ) complex. HJ DNA is sandwiched between 2 RuvA tetramers; dsDNA enters through RuvA and exits via RuvB. An RuvB hexamer assembles on each DNA strand where it exits the tetramer. Each RuvB hexamer is contacted by two RuvA subunits (via domain III) on 2 adjacent RuvB subunits; this complex drives branch migration. In the full resolvosome a probable DNA-RuvA(4)-RuvB(12)-RuvC(2) complex forms which resolves the HJ.

It localises to the cytoplasm. It catalyses the reaction ATP + H2O = ADP + phosphate + H(+). Functionally, the RuvA-RuvB-RuvC complex processes Holliday junction (HJ) DNA during genetic recombination and DNA repair, while the RuvA-RuvB complex plays an important role in the rescue of blocked DNA replication forks via replication fork reversal (RFR). RuvA specifically binds to HJ cruciform DNA, conferring on it an open structure. The RuvB hexamer acts as an ATP-dependent pump, pulling dsDNA into and through the RuvAB complex. RuvB forms 2 homohexamers on either side of HJ DNA bound by 1 or 2 RuvA tetramers; 4 subunits per hexamer contact DNA at a time. Coordinated motions by a converter formed by DNA-disengaged RuvB subunits stimulates ATP hydrolysis and nucleotide exchange. Immobilization of the converter enables RuvB to convert the ATP-contained energy into a lever motion, pulling 2 nucleotides of DNA out of the RuvA tetramer per ATP hydrolyzed, thus driving DNA branch migration. The RuvB motors rotate together with the DNA substrate, which together with the progressing nucleotide cycle form the mechanistic basis for DNA recombination by continuous HJ branch migration. Branch migration allows RuvC to scan DNA until it finds its consensus sequence, where it cleaves and resolves cruciform DNA. The chain is Holliday junction branch migration complex subunit RuvB from Chlamydia abortus (strain DSM 27085 / S26/3) (Chlamydophila abortus).